The primary structure comprises 353 residues: Photosystem II D2 protein (353 aa).

Threonine 2 bears the N-acetylthreonine mark. At threonine 2 the chain carries Phosphothreonine. A helical transmembrane segment spans residues 41 to 61 (CAYFALGGWFTGTTFVTSWYT). Histidine 118 provides a ligand contact to chlorophyll a. Residues 125–141 (GFMLRQFELARSVQLRP) form a helical membrane-spanning segment. Pheophytin a contacts are provided by glutamine 130 and asparagine 143. Residues 153-166 (VFVSVFLIYPLGQS) form a helical membrane-spanning segment. Histidine 198 contacts chlorophyll a. The helical transmembrane segment at 208 to 228 (AALLCAIHGATVENTLFEDGD) threads the bilayer. Histidine 215 and phenylalanine 262 together coordinate a plastoquinone. A Fe cation-binding site is contributed by histidine 215. Histidine 269 is a binding site for Fe cation. The helical transmembrane segment at 279 to 295 (GLWMSALGVVGLALNLR) threads the bilayer.

This sequence belongs to the reaction center PufL/M/PsbA/D family. In terms of assembly, PSII is composed of 1 copy each of membrane proteins PsbA, PsbB, PsbC, PsbD, PsbE, PsbF, PsbH, PsbI, PsbJ, PsbK, PsbL, PsbM, PsbT, PsbX, PsbY, PsbZ, Psb30/Ycf12, at least 3 peripheral proteins of the oxygen-evolving complex and a large number of cofactors. It forms dimeric complexes. The D1/D2 heterodimer binds P680, chlorophylls that are the primary electron donor of PSII, and subsequent electron acceptors. It shares a non-heme iron and each subunit binds pheophytin, quinone, additional chlorophylls, carotenoids and lipids. There is also a Cl(-1) ion associated with D1 and D2, which is required for oxygen evolution. The PSII complex binds additional chlorophylls, carotenoids and specific lipids. is required as a cofactor.

The protein resides in the plastid. It localises to the chloroplast thylakoid membrane. It carries out the reaction 2 a plastoquinone + 4 hnu + 2 H2O = 2 a plastoquinol + O2. Its function is as follows. Photosystem II (PSII) is a light-driven water:plastoquinone oxidoreductase that uses light energy to abstract electrons from H(2)O, generating O(2) and a proton gradient subsequently used for ATP formation. It consists of a core antenna complex that captures photons, and an electron transfer chain that converts photonic excitation into a charge separation. The D1/D2 (PsbA/PsbD) reaction center heterodimer binds P680, the primary electron donor of PSII as well as several subsequent electron acceptors. D2 is needed for assembly of a stable PSII complex. In Nymphaea alba (White water-lily), this protein is Photosystem II D2 protein.